The chain runs to 128 residues: Histone H2A.2 (128 aa).

The protein belongs to the histone H2A family. As to quaternary structure, the nucleosome is a histone octamer containing two molecules each of H2A, H2B, H3 and H4 assembled in one H3-H4 heterotetramer and two H2A-H2B heterodimers. The octamer wraps approximately 147 bp of DNA. In terms of tissue distribution, expressed in the generative cell within the bicellular pollen. Not detected in other reproductive or vegetative tissues.

It localises to the nucleus. It is found in the chromosome. In terms of biological role, core component of nucleosome. Nucleosomes wrap and compact DNA into chromatin, limiting DNA accessibility to the cellular machineries which require DNA as a template. Histones thereby play a central role in transcription regulation, DNA repair, DNA replication and chromosomal stability. DNA accessibility is regulated via a complex set of post-translational modifications of histones, also called histone code, and nucleosome remodeling. May be involved in the repression of gene expression in male gametes. The chain is Histone H2A.2 (gH2A) from Lilium longiflorum (Trumpet lily).